Reading from the N-terminus, the 391-residue chain is Tumor susceptibility gene 101 protein (391 aa).

Residue A2 is modified to N-acetylalanine. Residues 2–145 (AVSESQLKKM…GEEPPVFSRP (144 aa)) form the UEV domain. The interval 159–163 (PPNTS) is interaction with CEP55. The disordered stretch occupies residues 195 to 222 (GPYPATTSSQYPSQPPVTTAGPSRDGTI). The span at 200 to 215 (TTSSQYPSQPPVTTAG) shows a compositional bias: polar residues. Phosphothreonine is present on T221. Residues 238 to 317 (KLRWRMKEEM…NQSENNDIDE (80 aa)) adopt a coiled-coil conformation. A PTAP motif motif is present at residues 321–324 (PTAP). The region spanning 323–391 (APLYKQILNL…RKTAGLSDLY (69 aa)) is the SB domain.

The protein belongs to the ubiquitin-conjugating enzyme family. UEV subfamily. As to quaternary structure, component of the ESCRT-I complex (endosomal sorting complex required for transport I) which consists of TSG101, VPS28, a VPS37 protein (VPS37A to -D) and MVB12A or MVB12B in a 1:1:1:1 stoichiometry. Interacts with VPS37A, VPS37B and VPS37C. Interacts with DMAP1. Interacts with ubiquitin. Interacts with AATF. Interacts with stathmin and GMCL. Component of an ESCRT-I complex (endosomal sorting complex required for transport I) which consists of TSG101, VPS28, VPS37A and UBAP1 in a 1:1:1:1 stoichiometry. Interacts with HGS; the interaction mediates the association with the ESCRT-0 complex. Interacts with GGA1 and GGA3. Interacts (via UEV domain) with PDCD6IP/AIP1. Interacts with VPS28, SNF8 and VPS36. Self-associates. Interacts with MVB12A; the association appears to be mediated by the TSG101-VPS37 binary subcomplex. Interacts with VPS37D. Interacts with LRSAM1. Interacts with CEP55; the interaction is required for cytokinesis. Interacts with PDCD6. Interacts with LITAF. Interacts with MGRN1. Interacts with ARRDC1; recruits TSG101 to the plasma membrane. Monoubiquitinated at multiple sites by LRSAM1 and by MGRN1. Ubiquitination inactivates it, possibly by regulating its shuttling between an active membrane-bound protein and an inactive soluble form. Ubiquitination by MGRN1 requires the presence of UBE2D1.

Its subcellular location is the cytoplasm. The protein resides in the early endosome membrane. The protein localises to the late endosome membrane. It is found in the cytoskeleton. It localises to the microtubule organizing center. Its subcellular location is the centrosome. The protein resides in the midbody. The protein localises to the midbody ring. It is found in the nucleus. In terms of biological role, component of the ESCRT-I complex, a regulator of vesicular trafficking process. Binds to ubiquitinated cargo proteins and is required for the sorting of endocytic ubiquitinated cargos into multivesicular bodies (MVBs). Mediates the association between the ESCRT-0 and ESCRT-I complex. Required for completion of cytokinesis; the function requires CEP55. May be involved in cell growth and differentiation. Acts as a negative growth regulator. Required for the exosomal release of SDCBP, CD63 and syndecan. It may also play a role in the extracellular release of microvesicles that differ from the exosomes. The chain is Tumor susceptibility gene 101 protein (Tsg101) from Rattus norvegicus (Rat).